A 146-amino-acid polypeptide reads, in one-letter code: Core protein D2 (146 aa).

Belongs to the orthopoxvirus OPG114 family. As to quaternary structure, part of a complex composed of the kinase OPG054, OPG092, OPG100, OPG114, OPG115, OPG142 and OPG157.

Its subcellular location is the virion. Functionally, late protein which is part of a large complex required for early virion morphogenesis. This complex participates in the formation of virosomes and the incorporation of virosomal contents into nascent immature virions. The chain is Core protein D2 (OPG114) from Homo sapiens (Human).